A 273-amino-acid polypeptide reads, in one-letter code: Protein INAPERTURATE POLLEN1 (273 aa).

The region spanning 12–267 (SRRFNDFYED…KDQILLQDFE (256 aa)) is the DOG1 domain.

As to expression, expressed only in anthers and in pollen. Not detected in other flower tissues, stems, leaves and siliques.

It localises to the cytoplasm. Functionally, required for the formation of pollen surface apertures, which arise by restriction of exine deposition at specific sites. The aperture length depends on the INP1 dosage. Does not play a role in specifying the number or position of apertures. Acts in a sporophytic manner. This Arabidopsis thaliana (Mouse-ear cress) protein is Protein INAPERTURATE POLLEN1.